The following is a 276-amino-acid chain: Formamidopyrimidine-DNA glycosylase (276 aa).

The active-site Schiff-base intermediate with DNA is the Pro-2. Catalysis depends on Glu-3, which acts as the Proton donor. The active-site Proton donor; for beta-elimination activity is the Lys-60. 2 residues coordinate DNA: His-93 and Arg-112. The segment at 240–274 adopts an FPG-type zinc-finger fold; sequence NVYGKKGEPCVTCGTILEKTVVGGRGTHYCPICQP. The active-site Proton donor; for delta-elimination activity is the Arg-264.

It belongs to the FPG family. In terms of assembly, monomer. Requires Zn(2+) as cofactor.

The catalysed reaction is Hydrolysis of DNA containing ring-opened 7-methylguanine residues, releasing 2,6-diamino-4-hydroxy-5-(N-methyl)formamidopyrimidine.. It catalyses the reaction 2'-deoxyribonucleotide-(2'-deoxyribose 5'-phosphate)-2'-deoxyribonucleotide-DNA = a 3'-end 2'-deoxyribonucleotide-(2,3-dehydro-2,3-deoxyribose 5'-phosphate)-DNA + a 5'-end 5'-phospho-2'-deoxyribonucleoside-DNA + H(+). Involved in base excision repair of DNA damaged by oxidation or by mutagenic agents. Acts as a DNA glycosylase that recognizes and removes damaged bases. Has a preference for oxidized purines, such as 7,8-dihydro-8-oxoguanine (8-oxoG). Has AP (apurinic/apyrimidinic) lyase activity and introduces nicks in the DNA strand. Cleaves the DNA backbone by beta-delta elimination to generate a single-strand break at the site of the removed base with both 3'- and 5'-phosphates. This Bacillus cereus (strain ATCC 10987 / NRS 248) protein is Formamidopyrimidine-DNA glycosylase.